We begin with the raw amino-acid sequence, 127 residues long: Calcitonin gene-related peptide 2 (127 aa).

The signal sequence occupies residues 1 to 25; the sequence is MGFRKFSPFLALSILVLYQAGSLQA. Positions 26–79 are excised as a propeptide; the sequence is APFRSALESSPDPATLSKEDARLLLAALVQDYVQMKASELKQEQETQGSSSAAQ. The cysteines at positions 83 and 88 are disulfide-linked. The residue at position 118 (F118) is a Phenylalanine amide. Positions 124-127 are excised as a propeptide; sequence DLQA.

Belongs to the calcitonin family. As to expression, expressed in spinal cord, pituitary and thalamus.

It localises to the secreted. Functionally, CALCB/CGRP2 is a peptide hormone that induces vasodilation mediated by the CALCRL-RAMP1 receptor complex. Dilates a variety of vessels including the coronary, cerebral and systemic vasculature. Its abundance in the CNS also points toward a neurotransmitter or neuromodulator role. The polypeptide is Calcitonin gene-related peptide 2 (Homo sapiens (Human)).